A 338-amino-acid polypeptide reads, in one-letter code: Anthranilate phosphoribosyltransferase (338 aa).

Residues glycine 81, 84–85, threonine 89, 91–94, 109–117, and serine 121 contribute to the 5-phospho-alpha-D-ribose 1-diphosphate site; these read GD, NIST, and KHGNRSMVS. Glycine 81 provides a ligand contact to anthranilate. Serine 93 contributes to the Mg(2+) binding site. Asparagine 112 provides a ligand contact to anthranilate. Residue arginine 167 participates in anthranilate binding. 2 residues coordinate Mg(2+): aspartate 226 and glutamate 227.

Belongs to the anthranilate phosphoribosyltransferase family. Homodimer. The cofactor is Mg(2+).

The enzyme catalyses N-(5-phospho-beta-D-ribosyl)anthranilate + diphosphate = 5-phospho-alpha-D-ribose 1-diphosphate + anthranilate. It functions in the pathway amino-acid biosynthesis; L-tryptophan biosynthesis; L-tryptophan from chorismate: step 2/5. Catalyzes the transfer of the phosphoribosyl group of 5-phosphorylribose-1-pyrophosphate (PRPP) to anthranilate to yield N-(5'-phosphoribosyl)-anthranilate (PRA). The sequence is that of Anthranilate phosphoribosyltransferase from Acidithiobacillus ferrooxidans (strain ATCC 23270 / DSM 14882 / CIP 104768 / NCIMB 8455) (Ferrobacillus ferrooxidans (strain ATCC 23270)).